A 247-amino-acid polypeptide reads, in one-letter code: Type III pantothenate kinase (247 aa).

7–14 is an ATP binding site; the sequence is AIGNSRWH. Residues Y91 and 95–98 each bind substrate; that span reads GLDR. The Proton acceptor role is filled by D97. D117 is a binding site for K(+). T120 contributes to the ATP binding site. T172 contributes to the substrate binding site.

Belongs to the type III pantothenate kinase family. In terms of assembly, homodimer. Requires NH4(+) as cofactor. K(+) serves as cofactor.

The protein resides in the cytoplasm. The enzyme catalyses (R)-pantothenate + ATP = (R)-4'-phosphopantothenate + ADP + H(+). The protein operates within cofactor biosynthesis; coenzyme A biosynthesis; CoA from (R)-pantothenate: step 1/5. Catalyzes the phosphorylation of pantothenate (Pan), the first step in CoA biosynthesis. The sequence is that of Type III pantothenate kinase from Synechococcus elongatus (strain ATCC 33912 / PCC 7942 / FACHB-805) (Anacystis nidulans R2).